We begin with the raw amino-acid sequence, 77 residues long: PTS system N-acetylglucosamine-specific EIIB component (77 aa).

In terms of domain architecture, PTS EIIB type-1 spans 2–77; sequence ASKAEKIVAG…PIAAEIEDMM (76 aa). C24 serves as the catalytic Phosphocysteine intermediate; for EIIB activity.

The catalysed reaction is N(pros)-phospho-L-histidyl-[protein] + N-acetyl-D-glucosamine(out) = N-acetyl-D-glucosamine 6-phosphate(in) + L-histidyl-[protein]. Its function is as follows. The phosphoenolpyruvate-dependent sugar phosphotransferase system (sugar PTS), a major carbohydrate active transport system, catalyzes the phosphorylation of incoming sugar substrates concomitantly with their translocation across the cell membrane. This system is involved in N-acetylglucosamine (GlcNAc) transport. The protein is PTS system N-acetylglucosamine-specific EIIB component of Streptomyces coelicolor (strain ATCC BAA-471 / A3(2) / M145).